An 890-amino-acid polypeptide reads, in one-letter code: DNA mismatch repair protein MutS (890 aa).

645–652 provides a ligand contact to ATP; it reads GPNMAGKS.

This sequence belongs to the DNA mismatch repair MutS family.

In terms of biological role, this protein is involved in the repair of mismatches in DNA. It is possible that it carries out the mismatch recognition step. This protein has a weak ATPase activity. This Rickettsia rickettsii (strain Iowa) protein is DNA mismatch repair protein MutS.